The primary structure comprises 1051 residues: Leucine zipper protein 1 (1051 aa).

The residue at position 2 (Ala2) is an N-acetylalanine. The stretch at 11-354 forms a coiled coil; that stretch reads ASNRHLRFKL…KLQVKKQKEL (344 aa). Disordered regions lie at residues 247-293, 374-401, 432-554, and 569-601; these read ISST…KDLN, RTKL…HKRE, AAKA…SQVT, and ASSQ…SKAP. Positions 254-293 are enriched in basic and acidic residues; that stretch reads KESRRKGSLDYLKQVENETRDKSENEKNRNQEDNKVKDLN. Residues Ser256, Ser261, Ser395, Ser513, Ser571, Ser575, Ser612, and Ser660 each carry the phosphoserine modification. The span at 569-578 shows a compositional bias: polar residues; that stretch reads ASSQRASSEG. The disordered stretch occupies residues 675–727; it reads VNTTITPEPEPKLQPNSREKVKSRGGTRTPLFENDKNAAVENDSAKSMRSSSN. Position 680 is a phosphothreonine (Thr680). At Ser691 the chain carries Phosphoserine. Basic and acidic residues predominate over residues 707–720; the sequence is ENDKNAAVENDSAK. At Ser746 the chain carries Phosphoserine. Low complexity predominate over residues 789–799; sequence VTSKVTSSITI. Positions 789-837 are disordered; it reads VTSKVTSSITIYPSDSSGPRAVPTEAPRERHTSTSNIQVGPPELTSVSN. The interval 834–884 is required for interaction with FLNA; the sequence is SVSNHISSPLELSIHKHDITLQLTEAERVGDGSPKNRAETVVSRSSILIKP. Ser906 is subject to Phosphoserine. Positions 929-938 are enriched in basic and acidic residues; the sequence is RDLKCSEDPP. The tract at residues 929–1000 is disordered; that stretch reads RDLKCSEDPP…TQSSLTASEV (72 aa). Composition is skewed to polar residues over residues 946-958 and 989-999; these read EATN…SSTD and RRTQSSLTASE. Thr957 is modified (phosphothreonine). Ser993 carries the phosphoserine modification.

Component of the CERF-1 ISWI chromatin remodeling complex (also called the CECR2-containing remodeling factor (CERF) complex) at least composed of CECR2 and SMARCA1. Component of the CERF-5 ISWI chromatin remodeling complex at least composed of CECR2 and SMARCA5/SNF2H. LUZP1 is detected as part of the CERF-1 and CERF-5 complexes in embryonic stem (ES) cells where it is involved in complex stabilization but is not detected in the complexes in the testis. Interacts (via C-terminus) with LIMA1/EPLIN; both proteins restrict ciliation and may work together to regulate this process. Interacts with myosin light chain MYL9; the interaction results in inhibition of phosphorylation of MYL9 by DAPK3. Interacts with DAPK3; the interaction is likely to occur throughout the cell cycle and reduces the LUZP1-mediated suppression of MYL9 phosphorylation. Interacts with the chromosomal passenger complex (CPC); CPC kinase activity is required for localization of LUZP1 to the centromere. As to expression, expressed in cerebral cortex, cerebellum, hippocampus and brain stem.

The protein resides in the cytoplasm. The protein localises to the cytoskeleton. It localises to the microtubule organizing center. Its subcellular location is the centrosome. It is found in the cilium basal body. The protein resides in the midbody. The protein localises to the chromosome. It localises to the centromere. Its subcellular location is the spindle. It is found in the stress fiber. The protein resides in the nucleus. The protein localises to the cell projection. It localises to the dendrite. Its subcellular location is the perikaryon. It is found in the cell junction. The protein resides in the tight junction. F-actin cross-linking protein. Stabilizes actin and acts as a negative regulator of primary cilium formation. Positively regulates the phosphorylation of both myosin II and protein phosphatase 1 regulatory subunit PPP1R12A/MYPT1 and promotes the assembly of myosin II stacks within actin stress fibers. Inhibits the phosphorylation of myosin light chain MYL9 by DAPK3 and suppresses the constriction velocity of the contractile ring during cytokinesis. Binds to microtubules and promotes epithelial cell apical constriction by up-regulating levels of diphosphorylated myosin light chain (MLC) through microtubule-dependent inhibition of MLC dephosphorylation by myosin phosphatase. Involved in regulation of cell migration, nuclear size and centriole number, probably through regulation of the actin cytoskeleton. Component of the CERF-1 and CERF-5 chromatin remodeling complexes in embryonic stem cells where it acts to stabilize the complexes. Plays a role in embryonic brain and cardiovascular development. This chain is Leucine zipper protein 1 (Luzp1), found in Rattus norvegicus (Rat).